The primary structure comprises 42 residues: uncharacterized protein (42 aa).

This is an uncharacterized protein from Saccharomyces cerevisiae (strain ATCC 204508 / S288c) (Baker's yeast).